A 295-amino-acid chain; its full sequence is MMRILLFLATNLAVVLIASITLSLFGFNGFMAANGVDLNLNQLLIFCAVFGFAGSLFSLFISKWMAKMSTSTQIITQPRTRHEQWLLHTVEQLSREAGIKMPEVGIFPAYEANAFATGWNKNDALVAVSQGLLERFSPDEVKAVLAHEIGHVANGDMVTLALIQGVVNTFVMFFARIIGNFVDKVIFKNEEGQGIAYYVATIFAELVLGILASAIVMWFSRKREYRADEAGARLAGTNAMIGALQRLRSEQGLPVHMPDTLNAFGINGGIKQGLARMFMSHPPLEERIEALRRRG.

A run of 2 helical transmembrane segments spans residues 4–24 and 42–62; these read ILLF…TLSL and QLLI…LFIS. His-147 lines the Zn(2+) pocket. The active site involves Glu-148. His-151 is a Zn(2+) binding site. A run of 2 helical transmembrane segments spans residues 158 to 178 and 199 to 219; these read VTLA…ARII and VATI…VMWF. Residue Glu-224 coordinates Zn(2+).

Belongs to the peptidase M48B family. The cofactor is Zn(2+).

It localises to the cell inner membrane. In Pseudomonas fluorescens (strain ATCC BAA-477 / NRRL B-23932 / Pf-5), this protein is Protease HtpX.